We begin with the raw amino-acid sequence, 1407 residues long: DNA-directed RNA polymerase subunit beta' (1407 aa).

Zn(2+) is bound by residues C70, C72, C85, and C88. 3 residues coordinate Mg(2+): D460, D462, and D464. Residues C814, C888, C895, and C898 each contribute to the Zn(2+) site.

The protein belongs to the RNA polymerase beta' chain family. The RNAP catalytic core consists of 2 alpha, 1 beta, 1 beta' and 1 omega subunit. When a sigma factor is associated with the core the holoenzyme is formed, which can initiate transcription. Requires Mg(2+) as cofactor. Zn(2+) is required as a cofactor.

It carries out the reaction RNA(n) + a ribonucleoside 5'-triphosphate = RNA(n+1) + diphosphate. Functionally, DNA-dependent RNA polymerase catalyzes the transcription of DNA into RNA using the four ribonucleoside triphosphates as substrates. This chain is DNA-directed RNA polymerase subunit beta', found in Erwinia tasmaniensis (strain DSM 17950 / CFBP 7177 / CIP 109463 / NCPPB 4357 / Et1/99).